The chain runs to 365 residues: MNKVRHFIDTQDLSKKEIFEIFRLMKMLKEARYCGAVPELLKNKTLAMIFEEPSTRTRVSFEAAMTLLGGHAQYLKPGELHLGVRESLYDTTKVLSHMCDGIMCRALKHETVLNLAKYADVPVLNGLTDYNHPTQAICDVFTMLEYMPATKNLEYEDIKFEDIKVVFIGDRTNVCSSTMHITTKLGMNFVHISPKRYQSPQEWVDIANENIKQANSGSVLVTDDLEQVKDADIVYTDLWWWVDQEDEAEERVKAFKPTYQVTPELMKKAGQQALFMHCLPASRNVEVYDEVIDSDQSIAFEQAENRLTAQMGLLVYYLYPQIDKSSNAVKDYYRGKVEAFMEHQDRSWKQRYTYNNDYAETKNKK.

Carbamoyl phosphate is bound by residues 54 to 58 (STRTR), R105, and H132. A putrescine-binding site is contributed by 277–280 (HCLP).

This sequence belongs to the aspartate/ornithine carbamoyltransferase superfamily. PTCase family. In terms of assembly, homotrimer.

The protein resides in the cytoplasm. The enzyme catalyses carbamoyl phosphate + putrescine = N-carbamoylputrescine + phosphate + H(+). It participates in amine and polyamine biosynthesis; putrescine biosynthesis via agmatine pathway; putrescine from N-carbamoylputrescine (transferase route): step 1/1. Functionally, catalyzes the phosphorolysis of N-carbamoylputrescine to form carbamoyl phosphate and putrescine. Is involved in the degradation pathway of the polyamine agmatine. This is Putrescine carbamoyltransferase from Mycoplasma capricolum subsp. capricolum (strain California kid / ATCC 27343 / NCTC 10154).